A 142-amino-acid chain; its full sequence is Large ribosomal subunit protein uL13 (142 aa).

Belongs to the universal ribosomal protein uL13 family. Part of the 50S ribosomal subunit.

This protein is one of the early assembly proteins of the 50S ribosomal subunit, although it is not seen to bind rRNA by itself. It is important during the early stages of 50S assembly. This is Large ribosomal subunit protein uL13 from Pseudoalteromonas translucida (strain TAC 125).